A 67-amino-acid chain; its full sequence is ATP synthase F(0) complex subunit 8 (67 aa).

Residues 8–24 (TWFINIVSMILTLFIVF) form a helical membrane-spanning segment. Lys-54 is subject to N6-acetyllysine; alternate. Lys-54 bears the N6-succinyllysine; alternate mark. N6-acetyllysine is present on Lys-57.

This sequence belongs to the ATPase protein 8 family. Component of the ATP synthase complex composed at least of ATP5F1A/subunit alpha, ATP5F1B/subunit beta, ATP5MC1/subunit c (homooctomer), MT-ATP6/subunit a, MT-ATP8/subunit 8, ATP5ME/subunit e, ATP5MF/subunit f, ATP5MG/subunit g, ATP5MK/subunit k, ATP5MJ/subunit j, ATP5F1C/subunit gamma, ATP5F1D/subunit delta, ATP5F1E/subunit epsilon, ATP5PF/subunit F6, ATP5PB/subunit b, ATP5PD/subunit d, ATP5PO/subunit OSCP. ATP synthase complex consists of a soluble F(1) head domain (subunits alpha(3) and beta(3)) - the catalytic core - and a membrane F(0) domain - the membrane proton channel (subunits c, a, 8, e, f, g, k and j). These two domains are linked by a central stalk (subunits gamma, delta, and epsilon) rotating inside the F1 region and a stationary peripheral stalk (subunits F6, b, d, and OSCP). Interacts with PRICKLE3.

Its subcellular location is the mitochondrion membrane. Its function is as follows. Subunit 8, of the mitochondrial membrane ATP synthase complex (F(1)F(0) ATP synthase or Complex V) that produces ATP from ADP in the presence of a proton gradient across the membrane which is generated by electron transport complexes of the respiratory chain. ATP synthase complex consist of a soluble F(1) head domain - the catalytic core - and a membrane F(1) domain - the membrane proton channel. These two domains are linked by a central stalk rotating inside the F(1) region and a stationary peripheral stalk. During catalysis, ATP synthesis in the catalytic domain of F(1) is coupled via a rotary mechanism of the central stalk subunits to proton translocation. In vivo, can only synthesize ATP although its ATP hydrolase activity can be activated artificially in vitro. Part of the complex F(0) domain. The chain is ATP synthase F(0) complex subunit 8 from Equus caballus (Horse).